Consider the following 708-residue polypeptide: F-box protein MAX2 homolog A (708 aa).

Residues 2 to 49 enclose the F-box domain; sequence ATQLNDLPDVILSNIIAAVTDVRSRNSTSFVCRKWLVLERSTRVSLTL.

Part of a putative SCF (SKP1/Cullin/F-box) ubiquitin ligase complex. Interacts with DAD2. Interacts with KAI2IA in the presence of (-)-germacrene D. As to expression, mainly expressed in fully expanded leaves, lateral roots, axillary and shoot apex, and, to a lower extent, in internodes and nodes.

The protein localises to the nucleus. In terms of biological role, component of SCF(ASK-cullin-F-box) E3 ubiquitin ligase complexes, which may mediate the ubiquitination and subsequent proteasomal degradation of target proteins. Is necessary for responses to strigolactones and may be involved in the ubiquitin-mediated degradation of specific proteins that activate axillary growth. Targets probably SMAX1A to degradation upon the formation of an E3 SCF ubiquitin ligase complex (ASK-cullin-F-box) containing MAX2A and KAI2IA in response to (-)-germacrene D in the stigma. The sequence is that of F-box protein MAX2 homolog A from Petunia hybrida (Petunia).